The following is a 265-amino-acid chain: Seminal vesicle secretory protein 3A (265 aa).

An N-terminal signal peptide occupies residues Met1–Gly20. Tandem repeats lie at residues Gln116–Ser119, Gln122–Ser125, Gln129–Ser132, Gln136–Thr139, and Gln142–Ser145. The interval Gln116 to Ser145 is 5 X 4 AA tandem repeats of Q-X-K-[ST].

In terms of processing, glycosylated. Covalently cross-linked by transglutaminase, which is important for the formation of the gelatinous copulatory plug. Five repeats of Q-X-K-(S/T) in the central region of the protein serve as the transglutaminase substrate site(s). Highly expressed in the seminal vesicle where it is detected in luminal epithelium of the mucosa folds, and also in luminal fluid (at protein level). Not detected in other tissues tested.

Its subcellular location is the secreted. In terms of biological role, component of the copulatory plug. This chain is Seminal vesicle secretory protein 3A, found in Mus musculus (Mouse).